A 989-amino-acid polypeptide reads, in one-letter code: MNSSAIDADIPPSALAARFAAGPQLHAPEEAEKRLADWLGDVPADLAGAIRSVADRHPHVGVALRSIAEASPYLFDLIRADPARLLGLLRSDPEAGFVALLDRASAAVAAASDEAEVMAVLRKMKAEAALSIALCDIGGLWPVMQVTQALTDLAVNSVQMTLRFLLRQEAARGRIIPPNSDAPEQGSGLVVLAMGKMGAGELNYSSDIDLIVFYDLDAPTLAPDIEPQPFFVRVTQGLSRILQQRRHDGYVFRVDLRLRPDPASTPVALSTVSALNYYEREGRTWERAAMIKARACAGDLVAGEALLGDIAPFVWRKHLDFAALSDVHDMKRQMQTFRGQTEVAVEGHNVKVGRGGIREIEFFAQTQQLIAGGRHPELRVRPTLAALDILAARDWITYQARDELSVAYQFLRRVEHRIQMIADEQTHTLPDSVEAVERFSRFFGYESREAFARDLLAYFDCVQGHYGKLFEGDPTGTVKLPIDYAGGPDDTGLLDHLHGLGYKKPLMVATTLQQWMTGGYRILKVETTQRAFHEFVPMLIEELARAEEPDNAVNAFDRLLQALHRGGRLISLLSQNRDLLTLVALVLGAAPRLGDMLARQPQILDGLIDPRFFGAMPDRAELSARLAATLADAGPYEEFLDRLRLFGQESLFLIGTRILSGTVSTQQASVAFADVAEGIVGTVHDLVSEQFISQYGRIKDQQTAILAMGKLGSREMTASSDLDLILIYDFDHEQPDSDGERSLQGAQYFARFTQRLISAFTTRTNYGVLYDVDMRLRPSGRAGPLASRLDSFAEYQEVEAWTWEHLALTRARVISASPEFRERIEQVIRAVLTRPRDAAIIANDVAEMRHAIAQEKGEDDVWDMKYAAGGMVDIDFIAQYLQLVHAAATPEILGVSTLGAIDNAARLGVLAQSDAEVLRPAARLYHDLTQILRLCVSDKFKPETAGEDLLRVLVRAGDAPDFSSLEARVKETQAEVRAIFNRLIGGDSA.

The tract at residues 1 to 474 (MNSSAIDADI…HYGKLFEGDP (474 aa)) is adenylyl removase. The adenylyl transferase stretch occupies residues 480-989 (LPIDYAGGPD…FNRLIGGDSA (510 aa)).

This sequence belongs to the GlnE family. Mg(2+) is required as a cofactor.

The catalysed reaction is [glutamine synthetase]-O(4)-(5'-adenylyl)-L-tyrosine + phosphate = [glutamine synthetase]-L-tyrosine + ADP. It catalyses the reaction [glutamine synthetase]-L-tyrosine + ATP = [glutamine synthetase]-O(4)-(5'-adenylyl)-L-tyrosine + diphosphate. In terms of biological role, involved in the regulation of glutamine synthetase GlnA, a key enzyme in the process to assimilate ammonia. When cellular nitrogen levels are high, the C-terminal adenylyl transferase (AT) inactivates GlnA by covalent transfer of an adenylyl group from ATP to specific tyrosine residue of GlnA, thus reducing its activity. Conversely, when nitrogen levels are low, the N-terminal adenylyl removase (AR) activates GlnA by removing the adenylyl group by phosphorolysis, increasing its activity. The regulatory region of GlnE binds the signal transduction protein PII (GlnB) which indicates the nitrogen status of the cell. The protein is Bifunctional glutamine synthetase adenylyltransferase/adenylyl-removing enzyme of Rhodopseudomonas palustris (strain BisB5).